The chain runs to 145 residues: Cytochrome b (145 aa).

A helical transmembrane segment spans residues 38-58; the sequence is FFALHFLLPFVLAALVIMHLI. 2 residues coordinate heme b: His42 and His56. His61 contributes to the a ubiquinone binding site. A helical transmembrane segment spans residues 85–105; the sequence is FVFKDLVTVFIFFIVLSVFVF.

This sequence belongs to the cytochrome b family. As to quaternary structure, fungal cytochrome b-c1 complex contains 10 subunits; 3 respiratory subunits, 2 core proteins and 5 low-molecular weight proteins. Cytochrome b-c1 complex is a homodimer. Requires heme b as cofactor.

It localises to the mitochondrion inner membrane. Its function is as follows. Component of the ubiquinol-cytochrome c reductase complex (complex III or cytochrome b-c1 complex) that is part of the mitochondrial respiratory chain. The b-c1 complex mediates electron transfer from ubiquinol to cytochrome c. Contributes to the generation of a proton gradient across the mitochondrial membrane that is then used for ATP synthesis. The sequence is that of Cytochrome b (cob) from Aspergillus fumigatus (Neosartorya fumigata).